A 78-amino-acid chain; its full sequence is uncharacterized protein (78 aa).

Residues serine 13 to alanine 33 form a helical membrane-spanning segment.

It is found in the membrane. This is an uncharacterized protein from Methanocaldococcus jannaschii (strain ATCC 43067 / DSM 2661 / JAL-1 / JCM 10045 / NBRC 100440) (Methanococcus jannaschii).